A 179-amino-acid chain; its full sequence is UPF0227 protein Shewmr7_1806 (179 aa).

It belongs to the UPF0227 family.

The sequence is that of UPF0227 protein Shewmr7_1806 from Shewanella sp. (strain MR-7).